Consider the following 550-residue polypeptide: Acetyl-coenzyme A transporter 1 (550 aa).

Topologically, residues 1 to 74 (MSPTISHKDN…KRSYRAELSS (74 aa)) are cytoplasmic. Serine 42 is modified (phosphoserine). A helical transmembrane segment spans residues 75–95 (ILLLLFLYVLQGIPLGLAGSI). Over 96–113 (PLILQSKNVSYTDQAFFS) the chain is Extracellular. Asparagine 103 carries N-linked (GlcNAc...) asparagine glycosylation. The chain crosses the membrane as a helical span at residues 114 to 134 (FVFWPFSLKLLWAPLVDAVYF). Residues 135–141 (KNFGRRK) are Cytoplasmic-facing. The chain crosses the membrane as a helical span at residues 142–162 (SWLVPTQYILGIFMIYLSTQV). Topologically, residues 163 to 256 (DRLLGNIDGR…FQPQPRGIVT (94 aa)) are extracellular. A helical membrane pass occupies residues 257–277 (LSDFLFFWGTVFLITTTLVAL). Topologically, residues 278–300 (LKKETREASVVKEETQGITDTYK) are cytoplasmic. Residues 301–321 (LLFSIIKMPAVLAFCLLILTS) form a helical membrane-spanning segment. The Extracellular portion of the chain corresponds to 322 to 344 (KIGFSAADAVTGLKLVEEGVPKE). The helical transmembrane segment at 345-365 (HLALLAVPMVPLQIILPLLIS) threads the bilayer. The Cytoplasmic segment spans residues 366 to 375 (KYTAGPQPLN). The chain crosses the membrane as a helical span at residues 376–396 (IFYKAMPYRLLLGLEYALLVW). The Extracellular portion of the chain corresponds to 397 to 405 (WTPKVEHQG). Residues 406–426 (GFPIYYYIIVLLSYALHQVTL) traverse the membrane as a helical segment. Topologically, residues 427–509 (YSMYVSIMAF…LGGSCVTALD (83 aa)) are cytoplasmic. Residues 510–530 (GYYVESIVCVLIGFGWWFFLG) traverse the membrane as a helical segment. Topologically, residues 531–550 (PKFKKLQDEGPSSWKCKRTN) are extracellular.

It belongs to the SLC33A transporter family. As to quaternary structure, homodimerizes. As to expression, expressed in brain at all developmental stages. Detected in hippocampus, hypothalamus, cerebellum, cortex, olfactory bulb, and the ventral and dorsal anterior olfactory nucleus.

It is found in the endoplasmic reticulum membrane. The enzyme catalyses acetyl-CoA(in) = acetyl-CoA(out). Acetyl-CoA transporter that mediates active acetyl-CoA import through the endoplasmic reticulum (ER) membrane into the ER lumen where specific ER-based acetyl-CoA:lysine acetyltransferases are responsible for the acetylation of ER-based protein substrates, such as BACE1. Necessary for O-acetylation of gangliosides. This chain is Acetyl-coenzyme A transporter 1 (Slc33a1), found in Rattus norvegicus (Rat).